Reading from the N-terminus, the 366-residue chain is Holliday junction branch migration complex subunit RuvB (366 aa).

Residues 1-49 (MAIISSKKQPPEPNGQPNKRPESAPSVPKEKVLQPEAAIDEQGKQEESI) are disordered. Positions 13 to 210 (PNGQPNKRPE…FGLIQKLRFY (198 aa)) are large ATPase domain (RuvB-L). ATP is bound by residues Ile49, Arg50, Gly91, Lys94, Thr95, Thr96, 157-159 (EDY), Arg200, Tyr210, and Arg247. Position 95 (Thr95) interacts with Mg(2+). A small ATPAse domain (RuvB-S) region spans residues 211-281 (EVDELSQIVL…IAAEALQLFQ (71 aa)). The segment at 284–366 (PCGLDWTDRR…TPPNEQLSLL (83 aa)) is head domain (RuvB-H). DNA-binding residues include Arg339 and Arg344.

The protein belongs to the RuvB family. Homohexamer. Forms an RuvA(8)-RuvB(12)-Holliday junction (HJ) complex. HJ DNA is sandwiched between 2 RuvA tetramers; dsDNA enters through RuvA and exits via RuvB. An RuvB hexamer assembles on each DNA strand where it exits the tetramer. Each RuvB hexamer is contacted by two RuvA subunits (via domain III) on 2 adjacent RuvB subunits; this complex drives branch migration. In the full resolvosome a probable DNA-RuvA(4)-RuvB(12)-RuvC(2) complex forms which resolves the HJ.

Its subcellular location is the cytoplasm. It catalyses the reaction ATP + H2O = ADP + phosphate + H(+). Functionally, the RuvA-RuvB-RuvC complex processes Holliday junction (HJ) DNA during genetic recombination and DNA repair, while the RuvA-RuvB complex plays an important role in the rescue of blocked DNA replication forks via replication fork reversal (RFR). RuvA specifically binds to HJ cruciform DNA, conferring on it an open structure. The RuvB hexamer acts as an ATP-dependent pump, pulling dsDNA into and through the RuvAB complex. RuvB forms 2 homohexamers on either side of HJ DNA bound by 1 or 2 RuvA tetramers; 4 subunits per hexamer contact DNA at a time. Coordinated motions by a converter formed by DNA-disengaged RuvB subunits stimulates ATP hydrolysis and nucleotide exchange. Immobilization of the converter enables RuvB to convert the ATP-contained energy into a lever motion, pulling 2 nucleotides of DNA out of the RuvA tetramer per ATP hydrolyzed, thus driving DNA branch migration. The RuvB motors rotate together with the DNA substrate, which together with the progressing nucleotide cycle form the mechanistic basis for DNA recombination by continuous HJ branch migration. Branch migration allows RuvC to scan DNA until it finds its consensus sequence, where it cleaves and resolves cruciform DNA. In Nostoc sp. (strain PCC 7120 / SAG 25.82 / UTEX 2576), this protein is Holliday junction branch migration complex subunit RuvB.